Consider the following 335-residue polypeptide: Cholinephosphotransferase 1 (335 aa).

A run of 2 helical transmembrane segments spans residues 53-73 and 84-108; these read PNAI…PLIA and FWAY…GKQA. Asparagine 54 provides a ligand contact to CDP-choline. Aspartate 101 and aspartate 104 together coordinate Mg(2+). CDP-choline is bound at residue arginine 109. The next 6 helical transmembrane spans lie at 116–140, 151–169, 181–197, 213–238, 267–276, and 284–313; these read PLGE…SCIA, FFCC…WQTY, VTEV…VSAF, ELKF…RIIF, IGPGLLFLDQ, and EYVV…IAAH. Residue aspartate 122 participates in Mg(2+) binding. The active-site Proton acceptor is histidine 123. Residue aspartate 126 coordinates Mg(2+).

This sequence belongs to the CDP-alcohol phosphatidyltransferase class-I family. Mg(2+) is required as a cofactor. It depends on Mn(2+) as a cofactor.

It is found in the golgi apparatus membrane. It catalyses the reaction CDP-choline + a 1,2-diacyl-sn-glycerol = a 1,2-diacyl-sn-glycero-3-phosphocholine + CMP + H(+). The enzyme catalyses 1-octadecanoyl-2-(5Z,8Z,11Z,14Z-eicosatetraenoyl)-sn-glycerol + CDP-choline = 1-octadecanoyl-2-(5Z,8Z,11Z,14Z-eicosatetraenoyl)-sn-glycero-3-phosphocholine + CMP + H(+). The catalysed reaction is 1-hexadecanoyl-2-(9Z-octadecenoyl)-sn-glycerol + CDP-choline = 1-hexadecanoyl-2-(9Z-octadecenoyl)-sn-glycero-3-phosphocholine + CMP + H(+). It carries out the reaction 1-hexadecanoyl-2-(4Z,7Z,10Z,13Z,16Z,19Z-docosahexaenoyl)-sn-glycerol + CDP-choline = 1-hexadecanoyl-2-(4Z,7Z,10Z,13Z,16Z,19Z-docosahexaenoyl)-sn-glycero-3-phosphocholine + CMP + H(+). It catalyses the reaction 1,2-dioctanoyl-sn-glycerol + CDP-choline = 1,2-dioctanoyl-sn-glycero-3-phosphocholine + CMP + H(+). The protein operates within phospholipid metabolism; phosphatidylcholine biosynthesis; phosphatidylcholine from phosphocholine: step 2/2. Catalyzes the final step of de novo phosphatidylcholine (PC) synthesis, i.e. the transfer of choline phosphate from CDP-choline to the free hydroxyl of a diacylglycerol (DAG), producing a PC. It thereby plays a central role in the formation and maintenance of vesicular membranes. The chain is Cholinephosphotransferase 1 (CHPT1) from Gallus gallus (Chicken).